We begin with the raw amino-acid sequence, 112 residues long: UPF0342 protein SSA_1465 (112 aa).

It belongs to the UPF0342 family.

This is UPF0342 protein SSA_1465 from Streptococcus sanguinis (strain SK36).